The sequence spans 218 residues: Small ribosomal subunit protein uS3c (218 aa).

The KH type-2 domain occupies 47 to 118 (VQKNMRTSSG…KLNIAVTRIA (72 aa)).

This sequence belongs to the universal ribosomal protein uS3 family. In terms of assembly, part of the 30S ribosomal subunit.

It localises to the plastid. The protein localises to the chloroplast. The polypeptide is Small ribosomal subunit protein uS3c (rps3) (Nicotiana sylvestris (Wood tobacco)).